A 140-amino-acid chain; its full sequence is Cytochrome c-type biogenesis protein CcmE (140 aa).

Residues 1 to 7 (MKRKHKR) are Cytoplasmic-facing. A helical; Signal-anchor for type II membrane protein transmembrane segment spans residues 8–28 (LLFVLASFCAAGCALLFILSE). The Periplasmic segment spans residues 29 to 140 (LRESVSFFYT…TIPKALPEPK (112 aa)). Residues histidine 121 and tyrosine 125 each contribute to the heme site.

The protein belongs to the CcmE/CycJ family.

Its subcellular location is the cell inner membrane. Heme chaperone required for the biogenesis of c-type cytochromes. Transiently binds heme delivered by CcmC and transfers the heme to apo-cytochromes in a process facilitated by CcmF and CcmH. This is Cytochrome c-type biogenesis protein CcmE from Anaplasma marginale (strain Florida).